We begin with the raw amino-acid sequence, 532 residues long: Maternal protein exuperantia (532 aa).

Disordered stretches follow at residues 206-251 (CSAS…NAVQ) and 403-491 (TVKP…NGLK). Composition is skewed to low complexity over residues 220–231 (GSSMVSDSVSIS) and 404–417 (VKPV…NNNN). Residues 454–467 (SVSSLPDSTTKTPS) are compositionally biased toward polar residues. Ser467 carries the post-translational modification Phosphoserine.

In terms of assembly, component of the osk RNP complex, which is composed of at least exuperantia (exu), ypsilon schachtel (yps), aret (bruno), cup, and the mRNA of osk. In the sponge body, forms a ribonucleoprotein complex (RNP) containing at least me31B, exu, yps and the mRNA of osk; interactions with exu and yps are RNA dependent.

It is found in the cytoplasm. The protein resides in the cytoplasmic ribonucleoprotein granule. In terms of biological role, ensures the proper localization of the mRNA of the bicoid gene to the anterior regions of the oocyte thus playing a fundamental role in the establishment of the polarity of the oocyte. May bind the bcd mRNA. This is Maternal protein exuperantia (exu) from Drosophila melanogaster (Fruit fly).